A 124-amino-acid polypeptide reads, in one-letter code: Small ribosomal subunit protein uS12c (124 aa).

The protein belongs to the universal ribosomal protein uS12 family. In terms of assembly, part of the 30S ribosomal subunit.

The protein resides in the plastid. It is found in the chloroplast. In terms of biological role, with S4 and S5 plays an important role in translational accuracy. Located at the interface of the 30S and 50S subunits. This Cyanidium caldarium (Red alga) protein is Small ribosomal subunit protein uS12c (rps12).